Consider the following 91-residue polypeptide: Acylphosphatase (91 aa).

An Acylphosphatase-like domain is found at 5–91 (RLHAIVEGEV…KGEFTSFDTY (87 aa)). Active-site residues include Arg20 and Asn38.

The protein belongs to the acylphosphatase family.

It carries out the reaction an acyl phosphate + H2O = a carboxylate + phosphate + H(+). The polypeptide is Acylphosphatase (acyP) (Metallosphaera sedula (strain ATCC 51363 / DSM 5348 / JCM 9185 / NBRC 15509 / TH2)).